The chain runs to 459 residues: Smoothelin-like protein 1 (459 aa).

The segment covering 1–27 (MEQTEGNSSEDGTTVSPTAGNLETPGS) has biased composition (polar residues). Residues 1–314 (MEQTEGNSSE…RPRGPRAQNR (314 aa)) are disordered. Composition is skewed to basic and acidic residues over residues 42–55 (SDKE…EHLC), 75–105 (DELK…KEDT), 112–168 (DTGK…KEDA), 185–211 (ADVK…KELV), and 221–232 (EQGKENESEERA). Positions 124 to 154 (NEVREKEEAMLASEKQKVDEKETNLESKEKS) form a coiled coil. Positions 260–283 (PESTGETSPSASESSPSEVPGSPT) are enriched in low complexity. Residues 287-300 (PSEKKKDRAPERRV) show a composition bias toward basic and acidic residues. S301 carries the post-translational modification Phosphoserine; by PKA and PKG. A Calponin-homology (CH) domain is found at 343-449 (GGVKNMLLEW…YIQELYRSLV (107 aa)). A calmodulin-binding region spans residues 441–459 (IQELYRSLVQKGLVKTKKK).

The protein belongs to the smoothelin family. In terms of assembly, interacts with PPP1R12A. In terms of processing, maximal phosphorylation of Ser-301 correlates with maximal relaxation of aorta in response to acetylcholine. Widely expressed, with highest expression in skeletal muscles (at protein level). Within striated muscles, significantly more expressed in soleus muscle compared with plantaris muscle or white vastus (at protein level). 30-40% lower expression in females than in males (at protein level). Expressed in type 2a fibers, but not detected in fast twitch type 2b muscle white vastus nor in oxidative type I/b heart muscle (at protein level). Expressed within myometrial cells of the uterus, as well as in the endometrial layer. In the aorta, confined to smooth muscle cells. Not detected in endothelial cells.

The protein localises to the cytoplasm. It is found in the myofibril. The protein resides in the sarcomere. Its subcellular location is the i band. It localises to the m line. The protein localises to the nucleus. Its function is as follows. Plays a role in the regulation of contractile properties of both striated and smooth muscles. When unphosphorylated, may inhibit myosin dephosphorylation. Phosphorylation at Ser-301 reduces this inhibitory activity. The polypeptide is Smoothelin-like protein 1 (Smtnl1) (Mus musculus (Mouse)).